We begin with the raw amino-acid sequence, 50 residues long: Fungus-induced-related protein 15 (50 aa).

The N-terminal stretch at 1–21 (MNFYSLFVFIALIFSFNVVHG) is a signal peptide.

Its function is as follows. May have role in hypoxia response. This Caenorhabditis elegans protein is Fungus-induced-related protein 15 (fipr-15).